Consider the following 218-residue polypeptide: Copper acquisition factor BIM1 (218 aa).

An N-terminal signal peptide occupies residues 1–19; the sequence is MFALKFILITSFIASTALA. Cu(2+) contacts are provided by H20 and H65. Intrachain disulfides connect C40-C144 and C110-C161. 3 N-linked (GlcNAc...) asparagine glycosylation sites follow: N87, N91, and N124. Cu(2+) is bound at residue D138. N-linked (GlcNAc...) asparagine glycosylation is found at N158 and N170. The tract at residues 160 to 194 is disordered; the sequence is TCTDDASRTSNASSTSSGSATATSAAATSSSSGTS. Low complexity predominate over residues 167–194; that stretch reads RTSNASSTSSGSATATSAAATSSSSGTS. S190 carries the GPI-anchor amidated serine lipid modification. Positions 191–218 are cleaved as a propeptide — removed in mature form; the sequence is SGTSGAIKEVVGLGALSLALGIAGLIIL.

This sequence belongs to the X325 family. It depends on Cu(2+) as a cofactor.

The protein resides in the cell membrane. Lytic polysaccharide monooxygenase-like protein that has diverged to biological functions other than polysaccharide degradation since it does not perform oxidative cleavage of polysaccharides. Cell surface-bound protein that functions in the copper-accumulation pathway shared by the CUF1-dependent copper transporter CTR1. Involved in maintaining cell wall integrity during copper deficiency. Binds Cu(2+) with an estimated 1:1 stoichiometry and might serve as an extracellular copper ligand. FRE4 and FRE7 metalloreductases probably function together with CTR1 and BIM1 to liberate the Cu(2+) bound to the BIM1 copper-binding site for subsequent import of Cu(+) into the cell by CTR1, via the reduction of BIM1-bound Cu(2+) to Cu(+) to reduce binding affinity for BIM1 but increase affinity for CTR1. Facilitates copper acquisition in the brain of mammalian hosts and acts as a copper-dependent virulence trait in fungal meningitis. While BIM1 plays a critical role in cryptococcal meningitis, at least in part through its role in copper acquisition, it could play additional roles during copper limitation or as a means to invade and colonize host tissues in the brain, by compromising host carbohydrate integrity via its lytic polysaccharide monooxygenase (LPMO) activity, which has still to be determined. The polypeptide is Copper acquisition factor BIM1 (Cryptococcus neoformans var. neoformans serotype D (strain JEC21 / ATCC MYA-565) (Filobasidiella neoformans)).